Here is a 102-residue protein sequence, read N- to C-terminus: Large ribosomal subunit protein bL21 (102 aa).

Belongs to the bacterial ribosomal protein bL21 family. As to quaternary structure, part of the 50S ribosomal subunit. Contacts protein L20.

Its function is as follows. This protein binds to 23S rRNA in the presence of protein L20. The chain is Large ribosomal subunit protein bL21 from Campylobacter jejuni subsp. doylei (strain ATCC BAA-1458 / RM4099 / 269.97).